The sequence spans 235 residues: 7-cyano-7-deazaguanine synthase (235 aa).

7-17 (CSGGLDSVSLA) lines the ATP pocket. Zn(2+)-binding residues include Cys-185, Cys-193, Cys-196, and Cys-199.

The protein belongs to the QueC family. Zn(2+) is required as a cofactor.

The enzyme catalyses 7-carboxy-7-deazaguanine + NH4(+) + ATP = 7-cyano-7-deazaguanine + ADP + phosphate + H2O + H(+). It functions in the pathway purine metabolism; 7-cyano-7-deazaguanine biosynthesis. Its function is as follows. Catalyzes the ATP-dependent conversion of 7-carboxy-7-deazaguanine (CDG) to 7-cyano-7-deazaguanine (preQ(0)). This Allorhizobium ampelinum (strain ATCC BAA-846 / DSM 112012 / S4) (Agrobacterium vitis (strain S4)) protein is 7-cyano-7-deazaguanine synthase.